Here is a 586-residue protein sequence, read N- to C-terminus: Major facilitator superfamily domain-containing protein 6-like (586 aa).

2 consecutive transmembrane segments (helical) span residues 50–70 and 78–98; these read TLMGTKHLIAAFWAPVCAFLA and ALLIGSLLGSVGASLLMVLVP. The disordered stretch occupies residues 133–160; the sequence is AQESASSHPAKRTAEVEMPGFRNPPGES. The next 9 helical transmembrane spans lie at 246–266, 287–307, 326–346, 361–381, 400–420, 433–455, 456–476, 499–519, and 521–541; these read FILSLGSVAFWELLTAPLEQV, LWVWRLLGMSAGVCGITALVG, GYSVVSTLALLVSIAFPIPIC, IVGGDPHLILLASTTVLVGAI, ELVMGFSVALSLLGEILLHPF, LVGLGLSCLAGQLLYYSFLWSWW, SVLPIQILSAISNRALWWAVG, FYGSGCSLGSFVGGFVVMRFS, and AVLYQACCVALLLWLALLLSI.

It belongs to the major facilitator superfamily. MFSD6 family.

The protein resides in the membrane. This Homo sapiens (Human) protein is Major facilitator superfamily domain-containing protein 6-like (MFSD6L).